A 74-amino-acid chain; its full sequence is Acyclotide phyb-K (74 aa).

The N-terminal stretch at 1–24 (MARVNSLKCALCFIVLILFVQLNC) is a signal peptide. A propeptide spanning residues 25 to 43 (IPETRVMAVELSRVFLQTS) is cleaved from the precursor. Cystine bridges form between Cys47–Cys64, Cys51–Cys66, and Cys56–Cys71.

Post-translationally, contains 3 disulfide bonds. In terms of tissue distribution, expressed in midvein, lamina and periphery of leaves (at protein level).

Its function is as follows. Probably participates in a plant defense mechanism. The sequence is that of Acyclotide phyb-K from Petunia hybrida (Petunia).